An 88-amino-acid polypeptide reads, in one-letter code: Large ribosomal subunit protein bL31B (88 aa).

The protein belongs to the bacterial ribosomal protein bL31 family. Type B subfamily. As to quaternary structure, part of the 50S ribosomal subunit.

The polypeptide is Large ribosomal subunit protein bL31B (Leuconostoc mesenteroides subsp. mesenteroides (strain ATCC 8293 / DSM 20343 / BCRC 11652 / CCM 1803 / JCM 6124 / NCDO 523 / NBRC 100496 / NCIMB 8023 / NCTC 12954 / NRRL B-1118 / 37Y)).